Consider the following 1059-residue polypeptide: Carbamoyl phosphate synthase large chain (1059 aa).

Positions 1–401 are carboxyphosphate synthetic domain; that stretch reads MPKRKDIQKI…SLLKACRSLE (401 aa). ATP-binding residues include Arg-129, Arg-169, Gly-175, Gly-176, Arg-208, Ile-210, Glu-215, Gly-241, Ile-242, His-243, Gln-284, and Glu-298. The ATP-grasp 1 domain maps to 133 to 327; that stretch reads KQLMEELGQP…IAKLAAKIAV (195 aa). Mg(2+)-binding residues include Gln-284, Glu-298, and Asn-300. Mn(2+)-binding residues include Gln-284, Glu-298, and Asn-300. An oligomerization domain region spans residues 402-546; it reads VGVDHNELPA…YSTYGFENES (145 aa). A carbamoyl phosphate synthetic domain region spans residues 547–929; sequence VKSSKESVLV…ALYKAFEASY (383 aa). Residues 671-861 form the ATP-grasp 2 domain; that stretch reads EQALKELDIP…MAQVATRLIL (191 aa). Residues Arg-707, Ser-746, Ile-748, Glu-752, Gly-777, Val-778, His-779, Ser-780, Gln-820, and Glu-832 each coordinate ATP. Mg(2+)-binding residues include Gln-820, Glu-832, and Asn-834. Residues Gln-820, Glu-832, and Asn-834 each contribute to the Mn(2+) site. Residues 930-1059 form the MGS-like domain; it reads LHLPNFGNVV…ESRSFTTEAI (130 aa). The allosteric domain stretch occupies residues 930-1059; sequence LHLPNFGNVV…ESRSFTTEAI (130 aa).

The protein belongs to the CarB family. In terms of assembly, composed of two chains; the small (or glutamine) chain promotes the hydrolysis of glutamine to ammonia, which is used by the large (or ammonia) chain to synthesize carbamoyl phosphate. Tetramer of heterodimers (alpha,beta)4. Mg(2+) is required as a cofactor. The cofactor is Mn(2+).

The catalysed reaction is hydrogencarbonate + L-glutamine + 2 ATP + H2O = carbamoyl phosphate + L-glutamate + 2 ADP + phosphate + 2 H(+). It catalyses the reaction hydrogencarbonate + NH4(+) + 2 ATP = carbamoyl phosphate + 2 ADP + phosphate + 2 H(+). It functions in the pathway amino-acid biosynthesis; L-arginine biosynthesis; carbamoyl phosphate from bicarbonate: step 1/1. Its pathway is pyrimidine metabolism; UMP biosynthesis via de novo pathway; (S)-dihydroorotate from bicarbonate: step 1/3. Functionally, large subunit of the glutamine-dependent carbamoyl phosphate synthetase (CPSase). CPSase catalyzes the formation of carbamoyl phosphate from the ammonia moiety of glutamine, carbonate, and phosphate donated by ATP, constituting the first step of 2 biosynthetic pathways, one leading to arginine and/or urea and the other to pyrimidine nucleotides. The large subunit (synthetase) binds the substrates ammonia (free or transferred from glutamine from the small subunit), hydrogencarbonate and ATP and carries out an ATP-coupled ligase reaction, activating hydrogencarbonate by forming carboxy phosphate which reacts with ammonia to form carbamoyl phosphate. This Streptococcus gordonii (strain Challis / ATCC 35105 / BCRC 15272 / CH1 / DL1 / V288) protein is Carbamoyl phosphate synthase large chain.